Consider the following 404-residue polypeptide: Exodeoxyribonuclease 7 large subunit (404 aa).

This sequence belongs to the XseA family. In terms of assembly, heterooligomer composed of large and small subunits.

It is found in the cytoplasm. It catalyses the reaction Exonucleolytic cleavage in either 5'- to 3'- or 3'- to 5'-direction to yield nucleoside 5'-phosphates.. Its function is as follows. Bidirectionally degrades single-stranded DNA into large acid-insoluble oligonucleotides, which are then degraded further into small acid-soluble oligonucleotides. This chain is Exodeoxyribonuclease 7 large subunit, found in Ruminiclostridium cellulolyticum (strain ATCC 35319 / DSM 5812 / JCM 6584 / H10) (Clostridium cellulolyticum).